Reading from the N-terminus, the 183-residue chain is Apo-citrate lyase phosphoribosyl-dephospho-CoA transferase (183 aa).

Belongs to the CitX family.

It catalyses the reaction apo-[citrate lyase ACP] + 2'-(5''-triphospho-alpha-D-ribosyl)-3'-dephospho-CoA = holo-[citrate lyase ACP] + diphosphate. Transfers 2-(5''-triphosphoribosyl)-3'-dephosphocoenzyme-A on a serine residue to the apo-acyl carrier protein (gamma chain) of the citrate lyase to yield holo-acyl carrier protein. The chain is Apo-citrate lyase phosphoribosyl-dephospho-CoA transferase from Shigella flexneri serotype 5b (strain 8401).